Reading from the N-terminus, the 381-residue chain is Sulfofructose kinase (381 aa).

Residues glycine 10, 72 to 73, and 100 to 103 each bind ATP; these read RY and GNGT. Asparagine 101 is a binding site for Mg(2+). The active-site Proton acceptor is the aspartate 131.

Belongs to the phosphofructokinase type A (PFKA) family. Mg(2+) serves as cofactor.

It catalyses the reaction 6-deoxy-6-sulfo-D-fructose + ATP = 6-deoxy-6-sulfo-D-fructose 1-phosphate + ADP + H(+). Part of the sulfo-EMP2 pathway, a D-sulfoquinovose degradation pathway that produces sulfolactate (SL). Phosphorylates 6-deoxy-6-sulfo-D-fructose (SF) to 6-deoxy-6-sulfo-D-fructose 1-phosphate (SFP). This is Sulfofructose kinase from Alkalicoccus urumqiensis (Bacillus urumqiensis).